Here is a 72-residue protein sequence, read N- to C-terminus: Translation initiation factor IF-1 (72 aa).

Positions 1 to 72 constitute an S1-like domain; that stretch reads MIKEDNIEMH…SKGRIIFRSR (72 aa).

It belongs to the IF-1 family. As to quaternary structure, component of the 30S ribosomal translation pre-initiation complex which assembles on the 30S ribosome in the order IF-2 and IF-3, IF-1 and N-formylmethionyl-tRNA(fMet); mRNA recruitment can occur at any time during PIC assembly.

Its subcellular location is the cytoplasm. Functionally, one of the essential components for the initiation of protein synthesis. Stabilizes the binding of IF-2 and IF-3 on the 30S subunit to which N-formylmethionyl-tRNA(fMet) subsequently binds. Helps modulate mRNA selection, yielding the 30S pre-initiation complex (PIC). Upon addition of the 50S ribosomal subunit IF-1, IF-2 and IF-3 are released leaving the mature 70S translation initiation complex. The sequence is that of Translation initiation factor IF-1 from Blochmanniella floridana.